The following is a 322-amino-acid chain: Ribosomal RNA small subunit methyltransferase H (322 aa).

Residues 47–49, aspartate 67, phenylalanine 93, aspartate 112, and glutamine 119 each bind S-adenosyl-L-methionine; that span reads GGH.

Belongs to the methyltransferase superfamily. RsmH family.

The protein resides in the cytoplasm. It carries out the reaction cytidine(1402) in 16S rRNA + S-adenosyl-L-methionine = N(4)-methylcytidine(1402) in 16S rRNA + S-adenosyl-L-homocysteine + H(+). Its function is as follows. Specifically methylates the N4 position of cytidine in position 1402 (C1402) of 16S rRNA. This is Ribosomal RNA small subunit methyltransferase H from Stenotrophomonas maltophilia (strain K279a).